The following is a 99-amino-acid chain: Large ribosomal subunit protein bL25 (99 aa).

The protein belongs to the bacterial ribosomal protein bL25 family. In terms of assembly, part of the 50S ribosomal subunit; part of the 5S rRNA/L5/L18/L25 subcomplex. Contacts the 5S rRNA. Binds to the 5S rRNA independently of L5 and L18.

Functionally, this is one of the proteins that binds to the 5S RNA in the ribosome where it forms part of the central protuberance. The protein is Large ribosomal subunit protein bL25 of Nostoc sp. (strain PCC 7120 / SAG 25.82 / UTEX 2576).